The following is a 400-amino-acid chain: Eukaryotic translation initiation factor 3 subunit M (400 aa).

In terms of domain architecture, PCI spans 180–354; the sequence is LIAKIYSALV…QSFAVHRAQK (175 aa).

This sequence belongs to the eIF-3 subunit M family. As to quaternary structure, component of the eukaryotic translation initiation factor 3 (eIF-3) complex.

It localises to the cytoplasm. Functionally, component of the eukaryotic translation initiation factor 3 (eIF-3) complex, which is involved in protein synthesis of a specialized repertoire of mRNAs and, together with other initiation factors, stimulates binding of mRNA and methionyl-tRNAi to the 40S ribosome. The eIF-3 complex specifically targets and initiates translation of a subset of mRNAs involved in cell proliferation. The chain is Eukaryotic translation initiation factor 3 subunit M from Yarrowia lipolytica (strain CLIB 122 / E 150) (Yeast).